A 214-amino-acid chain; its full sequence is MTSFVLASASPARLAVLRSAGVEPVVRVSGVDEDALIAALGADAAPEHVVTELARAKAKDVLPVLARDGISDAVIVGCDSMLLIDGALQGKPGTVDVARERWSSMAGRSATLLTGHSVLRITEGAVVGDAHDHSATVVHFASPPDADLEAYLATGEPLQVAGAFTLDSLGGWFVDRIEGDPSSVIGIGLPLVRRLLADVGVGVAELWATSGRGD.

Asp-79 functions as the Proton acceptor in the catalytic mechanism.

This sequence belongs to the Maf family. A divalent metal cation serves as cofactor.

Its subcellular location is the cytoplasm. It catalyses the reaction a ribonucleoside 5'-triphosphate + H2O = a ribonucleoside 5'-phosphate + diphosphate + H(+). The enzyme catalyses a 2'-deoxyribonucleoside 5'-triphosphate + H2O = a 2'-deoxyribonucleoside 5'-phosphate + diphosphate + H(+). Functionally, nucleoside triphosphate pyrophosphatase. May have a dual role in cell division arrest and in preventing the incorporation of modified nucleotides into cellular nucleic acids. The protein is Nucleoside triphosphate pyrophosphatase of Rhodococcus opacus (strain B4).